Reading from the N-terminus, the 417-residue chain is Spermidine/putrescine import ATP-binding protein PotA (417 aa).

The ABC transporter domain occupies 5-308 (IILKDLTKVF…PANRFVAQFV (304 aa)). An ATP-binding site is contributed by 37–44 (GPSGCGKT). Residues 105–177 (DFNSKIKANL…TALKCKKINK (73 aa)) form an insert region.

It belongs to the ABC transporter superfamily. Spermidine/putrescine importer (TC 3.A.1.11.1) family. The complex is composed of two ATP-binding proteins (PotA), two transmembrane proteins (PotB and PotC) and a solute-binding protein (PotD).

It is found in the cell membrane. The enzyme catalyses ATP + H2O + polyamine-[polyamine-binding protein]Side 1 = ADP + phosphate + polyamineSide 2 + [polyamine-binding protein]Side 1.. Its function is as follows. Part of the ABC transporter complex PotABCD involved in spermidine/putrescine import. Responsible for energy coupling to the transport system. This Onion yellows phytoplasma (strain OY-M) protein is Spermidine/putrescine import ATP-binding protein PotA.